We begin with the raw amino-acid sequence, 463 residues long: Cysteine--tRNA ligase (463 aa).

C27 contacts Zn(2+). Positions 29–39 (MTVYDYCHLGH) match the 'HIGH' region motif. Residues C208, H233, and E237 each contribute to the Zn(2+) site. The 'KMSKS' region signature appears at 265–269 (KMSKS). K268 is an ATP binding site.

Belongs to the class-I aminoacyl-tRNA synthetase family. In terms of assembly, monomer. It depends on Zn(2+) as a cofactor.

It is found in the cytoplasm. The enzyme catalyses tRNA(Cys) + L-cysteine + ATP = L-cysteinyl-tRNA(Cys) + AMP + diphosphate. The polypeptide is Cysteine--tRNA ligase (Marinobacter nauticus (strain ATCC 700491 / DSM 11845 / VT8) (Marinobacter aquaeolei)).